A 358-amino-acid polypeptide reads, in one-letter code: NAC domain-containing protein 12 (358 aa).

An NAC domain is found at 16-177; the sequence is VPPGFRFHPT…GWVVCRVFRK (162 aa). A DNA-binding region spans residues 116 to 183; that stretch reads IGLRKTLVFY…VFRKKNYQKI (68 aa).

Stems and roots, specifically in interfascicular fibers (sclerenchyma), cells differentiating into vascular vessels (cambium), and xylem.

It is found in the nucleus. In terms of biological role, transcriptional activator of genes involved in biosynthesis of secondary walls. Together with NST1, required for the secondary cell wall thickening and lignification of sclerenchymatous fibers and secondary xylem vessels (tracheary elements). Seems to repress the secondary cell wall thickening of xylary fibers. May also regulate the secondary cell wall lignification of other tissues. Binds to and activates the promoter of MYB46. The polypeptide is NAC domain-containing protein 12 (Arabidopsis thaliana (Mouse-ear cress)).